A 256-amino-acid polypeptide reads, in one-letter code: Signal peptidase I (256 aa).

Active-site residues include Ser32 and Lys75.

The protein belongs to the peptidase S26 family.

It catalyses the reaction Cleavage of hydrophobic, N-terminal signal or leader sequences from secreted and periplasmic proteins.. The protein is Signal peptidase I (lepB) of Aquifex aeolicus (strain VF5).